Here is a 359-residue protein sequence, read N- to C-terminus: 3-dehydroquinate synthase (359 aa).

NAD(+) contacts are provided by residues 71–76, 105–109, 129–130, Lys142, Lys151, and 169–172; these read DGEQYK, GVIGD, TT, and CLST. Residues Glu184, His247, and His264 each coordinate Zn(2+).

It belongs to the sugar phosphate cyclases superfamily. Dehydroquinate synthase family. Co(2+) serves as cofactor. It depends on Zn(2+) as a cofactor. NAD(+) is required as a cofactor.

Its subcellular location is the cytoplasm. It carries out the reaction 7-phospho-2-dehydro-3-deoxy-D-arabino-heptonate = 3-dehydroquinate + phosphate. The protein operates within metabolic intermediate biosynthesis; chorismate biosynthesis; chorismate from D-erythrose 4-phosphate and phosphoenolpyruvate: step 2/7. In terms of biological role, catalyzes the conversion of 3-deoxy-D-arabino-heptulosonate 7-phosphate (DAHP) to dehydroquinate (DHQ). This Shewanella piezotolerans (strain WP3 / JCM 13877) protein is 3-dehydroquinate synthase.